The following is a 691-amino-acid chain: MEEIKALYVDLNKLRNIGIMAHIDAGKTTTTERILYFTGRKHQIGSVDDGTATMDWMVQEKERGITITSAATTCLWKEHRINIIDTPGHVDFTIEVERSLRVLDGAVAVFDATAGVEPQSETVWRQADKYNVPRIAFMNKMDKTGADFEMAVQTMVERLGAHPIPVQLPMGAESDFAGVIDLIEMKAIRWLNPEGTEMVVEEIPTQWKDKADEAREDMIEKIAEVDDEIMEMYLEGEEPSIEQIHAALRRITIAGLGTPVFCGSAKMNLGIQPLLDGIVRYLPSPLDLPPVKGFDKAGNEIQVQPTENAPFVAYAFKIQTDPYVGKLTFLRVYSGKLEKGSYVINTTKGVKERVSRLIFLHADKREDVEYVRAGDIVGVIGMKSTITGDTVCEENTYVILEKMEFPEPVISIAIEPETKDDETKLSKALQSLLDEDPSLRAYVDQETGETILSGMGELHLEIIVDRLKREFNVNVRVGKPQVAYRETITKDVKIEGKYIRQSGGRGQYGHVVVQFEPLGLDKTFEFVDKTVGGVIPKQYIPAIEEGIREAMQVGVLAGYPVVGIKATLLDGSYHEVDSSEMAFKIAASMAFKEAMEKGNPVLLEPIMKVEVTTPEDYMGNIIADLNSRRAHIDALENRGHLRVVKALVPLSEMFGYATTLRSLSQGRANYTMVLSHYEKVPEKVAEKILKG.

The tr-type G domain maps to 12–286 (NKLRNIGIMA…GIVRYLPSPL (275 aa)). Residues 21 to 28 (AHIDAGKT), 85 to 89 (DTPGH), and 139 to 142 (NKMD) contribute to the GTP site.

It belongs to the TRAFAC class translation factor GTPase superfamily. Classic translation factor GTPase family. EF-G/EF-2 subfamily.

Its subcellular location is the cytoplasm. In terms of biological role, catalyzes the GTP-dependent ribosomal translocation step during translation elongation. During this step, the ribosome changes from the pre-translocational (PRE) to the post-translocational (POST) state as the newly formed A-site-bound peptidyl-tRNA and P-site-bound deacylated tRNA move to the P and E sites, respectively. Catalyzes the coordinated movement of the two tRNA molecules, the mRNA and conformational changes in the ribosome. In Fervidobacterium nodosum (strain ATCC 35602 / DSM 5306 / Rt17-B1), this protein is Elongation factor G.